Consider the following 239-residue polypeptide: MGNSALRAHVETAQKTGVFQLKDRGLTEFPADLQKLTSNLRTIDLSNNKIESLPPLLIGKFTLLKSLSLNNNKLTVLPDEICNLKKLETLSLNNNHLRELPSTFGQLSALKTLSLSGNQLGALPPQLCSLRHLDVMDLSKNQIRSIPDSVGELQVIELNLNQNQISQISVKISCCPRLKILRLEENCLELSMLPQSILSDSQICLLAVEGNLFEIKKLRELEGYDKYMERFTATKKKFA.

Gly2 carries the N-myristoyl glycine lipid modification. 8 LRR repeats span residues 39–60 (NLRT…LIGK), 63–84 (LLKS…ICNL), 86–107 (KLET…FGQL), 109–131 (ALKT…CSLR), 132–153 (HLDV…VGEL), 154–175 (QVIE…ISCC), 177–197 (RLKI…PQSI), and 202–222 (QICL…RELE).

It localises to the membrane. This is Leucine-rich repeat-containing protein 57 (LRRC57) from Homo sapiens (Human).